The chain runs to 362 residues: UV excision repair protein RAD23 homolog A (362 aa).

The Ubiquitin-like domain occupies Met-1–Thr-81. Disordered stretches follow at residues Lys-80–Gly-160 and Gly-201–Gly-227. Residues Pro-88–Ser-109 are compositionally biased toward low complexity. Lys-122 participates in a covalent cross-link: Glycyl lysine isopeptide (Lys-Gly) (interchain with G-Cter in ubiquitin). A phosphoserine mark is found at Ser-123, Ser-128, Ser-133, Ser-136, and Ser-138. The segment covering Glu-126–Ser-144 has biased composition (low complexity). The UBA 1 domain maps to Ser-161–Gly-201. Phosphoserine occurs at positions 205, 294, and 356. Residues Pro-317–Gln-357 enclose the UBA 2 domain.

The protein belongs to the RAD23 family. As to quaternary structure, interacts with XPC; the interaction is suggesting the existence of a functional equivalent variant XPC complex. Interacts with PSMD4 and PSMC5. Interacts with ATXN3. Interacts with UBQLN2.

The protein localises to the nucleus. Its function is as follows. Multiubiquitin chain receptor involved in modulation of proteasomal degradation. Binds to 'Lys-48'-linked polyubiquitin chains in a length-dependent manner and with a lower affinity to 'Lys-63'-linked polyubiquitin chains. Proposed to be capable to bind simultaneously to the 26S proteasome and to polyubiquitinated substrates and to deliver ubiquitinated proteins to the proteasome. In terms of biological role, involved in nucleotide excision repair and is thought to be functional equivalent for RAD23B in global genome nucleotide excision repair (GG-NER) by association with XPC. In vitro, XPC:RAD23A dimer has NER activity. Can stabilize XPC. This Bos taurus (Bovine) protein is UV excision repair protein RAD23 homolog A (RAD23A).